A 346-amino-acid polypeptide reads, in one-letter code: Flap endonuclease 1 (346 aa).

Residues 1–102 (MGVTELGKLI…AEIEERRKVK (102 aa)) are N-domain. The Mg(2+) site is built by D31, D84, E156, E158, D177, D179, and D239. Residues 120–261 (DVAKYMKRAV…KALKLVWEFG (142 aa)) are I-domain.

Belongs to the XPG/RAD2 endonuclease family. FEN1 subfamily. Interacts with PCNA. PCNA stimulates the nuclease activity without altering cleavage specificity. Mg(2+) is required as a cofactor.

Structure-specific nuclease with 5'-flap endonuclease and 5'-3' exonuclease activities involved in DNA replication and repair. During DNA replication, cleaves the 5'-overhanging flap structure that is generated by displacement synthesis when DNA polymerase encounters the 5'-end of a downstream Okazaki fragment. Binds the unpaired 3'-DNA end and kinks the DNA to facilitate 5' cleavage specificity. Cleaves one nucleotide into the double-stranded DNA from the junction in flap DNA, leaving a nick for ligation. Also involved in the base excision repair (BER) pathway. Acts as a genome stabilization factor that prevents flaps from equilibrating into structures that lead to duplications and deletions. Also possesses 5'-3' exonuclease activity on nicked or gapped double-stranded DNA. In Pyrobaculum islandicum (strain DSM 4184 / JCM 9189 / GEO3), this protein is Flap endonuclease 1.